We begin with the raw amino-acid sequence, 220 residues long: Protein GrpE (220 aa).

Belongs to the GrpE family. In terms of assembly, homodimer.

It is found in the cytoplasm. Its function is as follows. Participates actively in the response to hyperosmotic and heat shock by preventing the aggregation of stress-denatured proteins, in association with DnaK and GrpE. It is the nucleotide exchange factor for DnaK and may function as a thermosensor. Unfolded proteins bind initially to DnaJ; upon interaction with the DnaJ-bound protein, DnaK hydrolyzes its bound ATP, resulting in the formation of a stable complex. GrpE releases ADP from DnaK; ATP binding to DnaK triggers the release of the substrate protein, thus completing the reaction cycle. Several rounds of ATP-dependent interactions between DnaJ, DnaK and GrpE are required for fully efficient folding. This chain is Protein GrpE, found in Bartonella quintana (strain Toulouse) (Rochalimaea quintana).